Here is a 273-residue protein sequence, read N- to C-terminus: Protein FAM216A (273 aa).

Residues 1–47 (MLGQLLPHTARGLGAAEMPGQGPGSDWTERSSSAEPPAVAGTEGGGG) form a disordered region.

This sequence belongs to the FAM216 family.

The protein is Protein FAM216A (FAM216A) of Homo sapiens (Human).